We begin with the raw amino-acid sequence, 411 residues long: Metal-binding regulatory protein cuf1 (411 aa).

Residues 1 to 40 constitute a DNA-binding region (copper-fist); that stretch reads MVVINNVKMACMKCIRGHRSSTCKHNDRELFPIRPKGRPI. Residues Cys11, Cys14, Cys23, and His25 each contribute to the Zn(2+) site. A disordered region spans residues 63–92; sequence SRKKGSKCSTSSTTDLDSSSASNSSCSIPS. Residues 69–92 are compositionally biased toward low complexity; sequence KCSTSSTTDLDSSSASNSSCSIPS.

The protein resides in the cytoplasm. It localises to the nucleus. Copper-sensing transcription factor that regulates iron uptake genes. Under copper starvation conditions activates the transcription of the copper transport genes, ctr4, ctr5 and ctr6. The sequence is that of Metal-binding regulatory protein cuf1 (cuf1) from Schizosaccharomyces pombe (strain 972 / ATCC 24843) (Fission yeast).